Reading from the N-terminus, the 79-residue chain is U-actitoxin-Avd8b (79 aa).

Positions 1–19 are cleaved as a signal peptide; it reads MKSLVIVFVVLLGVAMISA. A propeptide spanning residues 20–36 is cleaved from the precursor; sequence NEEELLAILQDQRNDAR.

This sequence belongs to the sea anemone 8 toxin family.

The protein resides in the secreted. It is found in the nematocyst. The polypeptide is U-actitoxin-Avd8b (Anemonia viridis (Snakelocks anemone)).